We begin with the raw amino-acid sequence, 315 residues long: Homoserine kinase (315 aa).

Residue proline 97–threonine 107 coordinates ATP.

The protein belongs to the GHMP kinase family. Homoserine kinase subfamily.

The protein resides in the cytoplasm. It catalyses the reaction L-homoserine + ATP = O-phospho-L-homoserine + ADP + H(+). It functions in the pathway amino-acid biosynthesis; L-threonine biosynthesis; L-threonine from L-aspartate: step 4/5. In terms of biological role, catalyzes the ATP-dependent phosphorylation of L-homoserine to L-homoserine phosphate. The protein is Homoserine kinase of Prochlorococcus marinus (strain MIT 9312).